Reading from the N-terminus, the 721-residue chain is Glycine--tRNA ligase beta subunit (721 aa).

It belongs to the class-II aminoacyl-tRNA synthetase family. As to quaternary structure, tetramer of two alpha and two beta subunits.

Its subcellular location is the cytoplasm. It catalyses the reaction tRNA(Gly) + glycine + ATP = glycyl-tRNA(Gly) + AMP + diphosphate. The polypeptide is Glycine--tRNA ligase beta subunit (Sinorhizobium medicae (strain WSM419) (Ensifer medicae)).